Consider the following 1217-residue polypeptide: Splicing factor 3B subunit 3 (1217 aa).

2 interaction with PHF5A, SF3B1 and SF3B5 regions span residues 105-119 and 145-168; these read ETFGKSGCRRIVPGQ and NRDAAARLTISSPLEAHKANTLVY. Ser156 carries the post-translational modification Phosphoserine. Interaction with SF3B1 and SF3B5 stretches follow at residues 193 to 231 and 786 to 804; these read DNDPTGEAAANTQQTLTFYELDLGLNHVVRKYSEPLEEH and RKFVIHPESNNLIIIETDH. The interval 1028–1049 is interaction with SF3B1; it reads TYPRWVTTASLLDYDTVAGADK. Positions 1100–1123 are interaction with SF3B5; it reads TVLSLQKTTLIPGGSESLVYTTLS. The residue at position 1200 (Thr1200) is a Phosphothreonine.

It belongs to the RSE1 family. In terms of assembly, component of the 17S U2 SnRNP complex, a ribonucleoprotein complex that contains small nuclear RNA (snRNA) U2 and a number of specific proteins. Part of the SF3B subcomplex of the 17S U2 SnRNP complex. SF3B associates with the splicing subcomplex SF3A and a 12S RNA unit to form the U2 small nuclear ribonucleoproteins complex (U2 snRNP). Within the SF3B subcomplex, interacts directly with SF3B1 (via HEAT domain), SF3B5 and PHF5A. Identified in the spliceosome A complex; remains associated with the spliceosome throughout the splicing process. Component of the spliceosome B complex. Identified in the spliceosome C complex. Identified in the spliceosome E complex. Component of the minor (U12-type spliceosome) spliceosome. Within this complex, interacts with SCNM1. Associates with the STAGA transcription coactivator-HAT complex. Interacts with SUPT3H. Interacts with TAF3.

The protein localises to the nucleus. In terms of biological role, component of the 17S U2 SnRNP complex of the spliceosome, a large ribonucleoprotein complex that removes introns from transcribed pre-mRNAs. The 17S U2 SnRNP complex (1) directly participates in early spliceosome assembly and (2) mediates recognition of the intron branch site during pre-mRNA splicing by promoting the selection of the pre-mRNA branch-site adenosine, the nucleophile for the first step of splicing. Within the 17S U2 SnRNP complex, SF3B3 is part of the SF3B subcomplex, which is required for 'A' complex assembly formed by the stable binding of U2 snRNP to the branchpoint sequence in pre-mRNA. Sequence independent binding of SF3A and SF3B subcomplexes upstream of the branch site is essential, it may anchor U2 snRNP to the pre-mRNA. May also be involved in the assembly of the 'E' complex. Also acts as a component of the minor spliceosome, which is involved in the splicing of U12-type introns in pre-mRNAs. The chain is Splicing factor 3B subunit 3 (SF3B3) from Pongo abelii (Sumatran orangutan).